A 110-amino-acid chain; its full sequence is DNA-binding protein Mhun_3016 (110 aa).

The protein belongs to the PDCD5 family.

The sequence is that of DNA-binding protein Mhun_3016 from Methanospirillum hungatei JF-1 (strain ATCC 27890 / DSM 864 / NBRC 100397 / JF-1).